The primary structure comprises 140 residues: Cell division protein SepF (140 aa).

The tract at residues 15–47 (DSQYEEPTEASQAAAPTESATNTRSTPKVVPMQ) is disordered.

This sequence belongs to the SepF family. As to quaternary structure, homodimer. Interacts with FtsZ.

The protein resides in the cytoplasm. Its function is as follows. Cell division protein that is part of the divisome complex and is recruited early to the Z-ring. Probably stimulates Z-ring formation, perhaps through the cross-linking of FtsZ protofilaments. Its function overlaps with FtsA. The protein is Cell division protein SepF of Lactiplantibacillus plantarum (strain ATCC BAA-793 / NCIMB 8826 / WCFS1) (Lactobacillus plantarum).